The chain runs to 658 residues: DNA mismatch repair protein MutL (658 aa).

Residues 114–130 (RQEDSSHATQVKAEDGK) show a composition bias toward basic and acidic residues. Disordered regions lie at residues 114–137 (RQED…PTAA), 369–401 (DYPT…APQQ), and 438–457 (FGNM…LSDG).

Belongs to the DNA mismatch repair MutL/HexB family.

Functionally, this protein is involved in the repair of mismatches in DNA. It is required for dam-dependent methyl-directed DNA mismatch repair. May act as a 'molecular matchmaker', a protein that promotes the formation of a stable complex between two or more DNA-binding proteins in an ATP-dependent manner without itself being part of a final effector complex. This chain is DNA mismatch repair protein MutL, found in Neisseria meningitidis serogroup A / serotype 4A (strain DSM 15465 / Z2491).